Here is a 281-residue protein sequence, read N- to C-terminus: 2-dehydro-3-deoxyphosphooctonate aldolase (281 aa).

Belongs to the KdsA family.

It localises to the cytoplasm. The catalysed reaction is D-arabinose 5-phosphate + phosphoenolpyruvate + H2O = 3-deoxy-alpha-D-manno-2-octulosonate-8-phosphate + phosphate. It functions in the pathway carbohydrate biosynthesis; 3-deoxy-D-manno-octulosonate biosynthesis; 3-deoxy-D-manno-octulosonate from D-ribulose 5-phosphate: step 2/3. It participates in bacterial outer membrane biogenesis; lipopolysaccharide biosynthesis. In Pseudomonas aeruginosa (strain UCBPP-PA14), this protein is 2-dehydro-3-deoxyphosphooctonate aldolase.